The primary structure comprises 290 residues: N-acetylneuraminate lyase (290 aa).

Residues Ser-44 and Thr-45 each contribute to the aceneuramate site. The Proton donor role is filled by Tyr-133. Residue Lys-161 is the Schiff-base intermediate with substrate of the active site. Residues Thr-163, Gly-185, Asp-187, Glu-188, and Ser-204 each coordinate aceneuramate.

Belongs to the DapA family. NanA subfamily. In terms of assembly, homotetramer.

Its subcellular location is the cytoplasm. The catalysed reaction is aceneuramate = aldehydo-N-acetyl-D-mannosamine + pyruvate. Its pathway is amino-sugar metabolism; N-acetylneuraminate degradation; D-fructose 6-phosphate from N-acetylneuraminate: step 1/5. Its function is as follows. Catalyzes the reversible aldol cleavage of N-acetylneuraminic acid (sialic acid; Neu5Ac) to form pyruvate and N-acetylmannosamine (ManNAc) via a Schiff base intermediate. In Fusobacterium nucleatum subsp. nucleatum (strain ATCC 25586 / DSM 15643 / BCRC 10681 / CIP 101130 / JCM 8532 / KCTC 2640 / LMG 13131 / VPI 4355), this protein is N-acetylneuraminate lyase.